Here is a 45-residue protein sequence, read N- to C-terminus: Non-specific lipid-transfer protein (45 aa).

This sequence belongs to the plant LTP family. As to expression, expressed in pollen.

Functionally, plant non-specific lipid-transfer proteins transfer phospholipids as well as galactolipids across membranes. May play a role in wax or cutin deposition in the cell walls of expanding epidermal cells and certain secretory tissues. This chain is Non-specific lipid-transfer protein, found in Broussonetia papyrifera (Paper mulberry).